Consider the following 357-residue polypeptide: Dual-specificity RNA methyltransferase RlmN (357 aa).

Residue Glu-89 is the Proton acceptor of the active site. The 232-residue stretch at 109-340 (EGEKYTVCVS…CTIRESKALD (232 aa)) folds into the Radical SAM core domain. A disulfide bridge links Cys-116 with Cys-345. [4Fe-4S] cluster is bound by residues Cys-123, Cys-127, and Cys-130. Residues 173 to 174 (GE), Ser-203, 226 to 228 (SLH), and Asn-302 contribute to the S-adenosyl-L-methionine site. Residue Cys-345 is the S-methylcysteine intermediate of the active site.

It belongs to the radical SAM superfamily. RlmN family. Requires [4Fe-4S] cluster as cofactor.

The protein resides in the cytoplasm. The catalysed reaction is adenosine(2503) in 23S rRNA + 2 reduced [2Fe-2S]-[ferredoxin] + 2 S-adenosyl-L-methionine = 2-methyladenosine(2503) in 23S rRNA + 5'-deoxyadenosine + L-methionine + 2 oxidized [2Fe-2S]-[ferredoxin] + S-adenosyl-L-homocysteine. It catalyses the reaction adenosine(37) in tRNA + 2 reduced [2Fe-2S]-[ferredoxin] + 2 S-adenosyl-L-methionine = 2-methyladenosine(37) in tRNA + 5'-deoxyadenosine + L-methionine + 2 oxidized [2Fe-2S]-[ferredoxin] + S-adenosyl-L-homocysteine. Functionally, specifically methylates position 2 of adenine 2503 in 23S rRNA and position 2 of adenine 37 in tRNAs. m2A2503 modification seems to play a crucial role in the proofreading step occurring at the peptidyl transferase center and thus would serve to optimize ribosomal fidelity. The chain is Dual-specificity RNA methyltransferase RlmN from Helicobacter pylori (strain HPAG1).